Consider the following 315-residue polypeptide: Aspartate carbamoyltransferase catalytic subunit (315 aa).

R61 and T62 together coordinate carbamoyl phosphate. K90 contacts L-aspartate. The carbamoyl phosphate site is built by R111, H139, and Q142. L-aspartate-binding residues include R172 and R234. Residues L274 and P275 each contribute to the carbamoyl phosphate site.

It belongs to the aspartate/ornithine carbamoyltransferase superfamily. ATCase family. As to quaternary structure, heterooligomer of catalytic and regulatory chains.

It carries out the reaction carbamoyl phosphate + L-aspartate = N-carbamoyl-L-aspartate + phosphate + H(+). Its pathway is pyrimidine metabolism; UMP biosynthesis via de novo pathway; (S)-dihydroorotate from bicarbonate: step 2/3. Catalyzes the condensation of carbamoyl phosphate and aspartate to form carbamoyl aspartate and inorganic phosphate, the committed step in the de novo pyrimidine nucleotide biosynthesis pathway. In Hyperthermus butylicus (strain DSM 5456 / JCM 9403 / PLM1-5), this protein is Aspartate carbamoyltransferase catalytic subunit.